Consider the following 2667-residue polypeptide: eIF-2-alpha kinase activator GCN1 (2667 aa).

HEAT repeat units lie at residues Asp-19 to Ser-56, Gln-95 to Thr-132, Ser-159 to Met-198, Asp-293 to Val-330, Leu-336 to Asp-375, Ser-398 to Ile-439, Glu-466 to Asn-503, and Leu-794 to Val-832. Residues Arg-842–Glu-879 form a disordered region. HEAT repeat units lie at residues Pro-929 to Ser-967, Leu-985 to Asn-1024, Gly-1085 to Pro-1122, His-1199 to Leu-1237, Gly-1290 to Ala-1330, Pro-1333 to Lys-1370, Gln-1371 to Leu-1407, Leu-1412 to Arg-1450, Pro-1454 to Gly-1491, His-1492 to Lys-1529, Ser-1533 to Asn-1570, Glu-1572 to Asp-1608, Ala-1610 to Pro-1647, Pro-1652 to Glu-1689, Asn-1691 to Ile-1728, Ser-1729 to Asp-1766, Pro-1770 to Val-1807, and Gly-1809 to Gly-1845. Residues Ser-1853–Ile-1875 are disordered. 10 HEAT repeats span residues Glu-1882 to Lys-1919, Glu-1923 to Asp-1960, Ile-1962 to Thr-1998, Pro-2002 to Ser-2039, Lys-2040 to Ser-2078, Val-2080 to Glu-2110, Val-2114 to Glu-2152, Gly-2154 to Met-2190, Glu-2193 to Lys-2230, and Lys-2264 to Ala-2301. Residues Gly-2265–Leu-2412 are RWDBD region. Residues Gln-2326–Ile-2348 form an HEAT 37; degenerate repeat. The HEAT 38; degenerate repeat unit spans residues Phe-2349 to Ser-2385. HEAT repeat units lie at residues Asp-2387–Lys-2421, Ala-2425–Ser-2462, Pro-2508–Leu-2545, and Thr-2546–Gln-2583.

It belongs to the GCN1 family. Interacts with eif2ak4/gcn2; this interaction stimulates the eif2ak4/gcn2 kinase activity and is impaired by impact upon a variety of stress conditions, such as amino acid depletion, UV-C irradiation, proteasome inhibitor treatment and glucose deprivation. Interacts with impact; this prevents the interaction of gcn1 with eif2ak4/gcn2 and inhibits eif2ak4/gcn2 kinase activity.

The protein localises to the cytoplasm. Ribosome collision sensor that activates a translation quality control pathway when a ribosome has stalled during translation. Directly binds to the ribosome and acts as a sentinel for colliding ribosomes. Gcn1 also acts as a positive activator of the integrated stress response (ISR) by mediating activation of eif2ak4/gcn2 in response to amino acid starvation. Interaction with eif2ak4/gcn2 on translating ribosomes stimulates eif2ak4/gcn2 kinase activity, leading to phosphorylation of eukaryotic translation initiation factor 2 (eIF-2-alpha/eif2s1). EIF2S1/eIF-2-alpha phosphorylation converts EIF2S1/eIF-2-alpha into a global protein synthesis inhibitor, leading to a global attenuation of cap-dependent translation, and thus to a reduced overall utilization of amino acids, while concomitantly initiating the preferential translation of ISR-specific mRNAs, such as the transcriptional activator atf4, and hence allowing atf4-mediated reprogramming of amino acid biosynthetic gene expression to alleviate nutrient depletion. This Dictyostelium discoideum (Social amoeba) protein is eIF-2-alpha kinase activator GCN1.